The chain runs to 239 residues: MSNKKDIAVKISGGKKIREAREKVKSDTLYNLTNAVERLKSASYVKFDPTLEIVMKLGIDSRHSDQMVRGVVNLPAGTGKTVRVAVICKEEREEEAKSAGADLVGSTNIIDEIKAGKINFDVCIATPDVMAAIGSVARILGPKGLMPNPKLGTVTLDIKNAIKNAKSGQVEYRAEKAGIIHAGLGKLSFSDQDLLKNLNAFIEAVIKAKPAGLKGSYLKAMYLSSTMGASVQIDLTSIA.

Belongs to the universal ribosomal protein uL1 family. In terms of assembly, part of the 50S ribosomal subunit.

Binds directly to 23S rRNA. The L1 stalk is quite mobile in the ribosome, and is involved in E site tRNA release. Functionally, protein L1 is also a translational repressor protein, it controls the translation of the L11 operon by binding to its mRNA. This chain is Large ribosomal subunit protein uL1, found in Rickettsia rickettsii (strain Iowa).